We begin with the raw amino-acid sequence, 936 residues long: MEMPMPPDDQELRNVIDKLAQFVARNGPEFEKMTMEKQKDNPKFSFLFGGEFYSYYKCKLALEQQQLICKQQAPELEPTSAMPPLPQPPLAPTASLTPAQGTPSMDELIQQSQWSLQQQEQHLLALRQEQVTTAVAHAVEQQMQKLLEETQLDMSEFDNLLQPIIDTCTKDAISAGKNWMFSNAKSPPHCELMAGHLRNRITADGAHFELRLHLIYLINDVLHHCQRKQARELLAALQKVVVPIYCTSFLAVEEDKQQKIARLLQLWEKNGYFDDSIIQQLQSPALGLGQYQATLINEYSSVVQPVQLAFQQQIQSLKTQHEEFVSSLAQQQQQQQQQQQQQPQPQPQPQIQLPQMEADVKATPPPPAPPPASAPAPTIPPTTQPDDNKPPIQMPGSSEYDTSAGVQDPAAAGPRGPGPHEQIPPNKPPWFDQPHPVAPWGQQQPPEQPPYPHHQGGPPHCPPWNNSHEGMWGEQRGDPGWNGQRDAPWNNQPDPNWNNQFEGPWNNQHEPPPWGGAQREPPFRMQRPPHFRGPFPPHQQHPQFNQPPHPHNFNRFPPRFMQDDFPPRHPFERPPYPHRFDYPQGDFPADMGPPHHHPGHRMPHPGINEHPPWAGPQHPDFGPPPHGFNGQPPHMRRQGPPHINHDDPSLVPNVPYFDLPAGLMAPLVKLEDHEYKPLDPKDIRLPPPMPPSERLLAAVEAFYSPPSHDRPRNSEGWEQNGLYEFFRAKMRARRRKGQEKRNSGPSRSRSRSKSRGRSSSRSSSRSSKSSRSSSRSHSRSRSRSSSRSRSRSRSRSRSSRSRSRSRSRSRSKSYSPGRRRRSRSRSPTPPSAAGLGSNSAPPIPDSRLGEENKGHQMLVKMGWSGSGGLGAKEQGIQDPIKGGDVRDKWDQYKGVGVALDDPYENYRRNKSYSFIARMKARDEFSTFGTRKEEKED.

The residue at position 1 (methionine 1) is an N-acetylmethionine. Residues 15 to 57 (VIDKLAQFVARNGPEFEKMTMEKQKDNPKFSFLFGGEFYSYYK) form an SURP motif repeat. Lysine 18 carries the N6-acetyllysine modification. A disordered region spans residues 77–102 (EPTSAMPPLPQPPLAPTASLTPAQGT). The segment covering 81 to 91 (AMPPLPQPPLA) has biased composition (pro residues). The CID domain maps to 149–289 (ETQLDMSEFD…QLQSPALGLG (141 aa)). Residues 328–646 (LAQQQQQQQQ…RQGPPHINHD (319 aa)) form a disordered region. Residues 330–355 (QQQQQQQQQQQQQPQPQPQPQIQLPQ) show a composition bias toward low complexity. Residues 363–383 (TPPPPAPPPASAPAPTIPPTT) show a composition bias toward pro residues. Over residues 395-405 (PGSSEYDTSAG) the composition is skewed to polar residues. The segment covering 488–500 (PWNNQPDPNWNNQ) has biased composition (low complexity). The segment covering 534–550 (PFPPHQQHPQFNQPPHP) has biased composition (pro residues). A compositionally biased stretch (low complexity) spans 551 to 560 (HNFNRFPPRF). The span at 561–572 (MQDDFPPRHPFE) shows a compositional bias: basic and acidic residues. Over residues 594–603 (PHHHPGHRMP) the composition is skewed to basic residues. Residue tyrosine 723 is modified to Phosphotyrosine. A disordered region spans residues 731–887 (RARRRKGQEK…DPIKGGDVRD (157 aa)). The span at 748 to 758 (SRSRSKSRGRS) shows a compositional bias: basic residues. The segment covering 759-773 (SSRSSSRSSKSSRSS) has biased composition (low complexity). Basic residues predominate over residues 774 to 824 (SRSHSRSRSRSSSRSRSRSRSRSRSSRSRSRSRSRSRSKSYSPGRRRRSRS). Residues serine 822, serine 824, and serine 826 each carry the phosphoserine modification. A Phosphothreonine modification is found at threonine 828. At serine 837 the chain carries Phosphoserine. Residues 850–900 (EENKGHQMLVKMGWSGSGGLGAKEQGIQDPIKGGDVRDKWDQYKGVGVALD) enclose the G-patch domain. Lysine 853 participates in a covalent cross-link: Glycyl lysine isopeptide (Lys-Gly) (interchain with G-Cter in SUMO2). Serine 864 and serine 866 each carry phosphoserine. Lysine 881 participates in a covalent cross-link: Glycyl lysine isopeptide (Lys-Gly) (interchain with G-Cter in SUMO2). The residue at position 888 (lysine 888) is an N6-acetyllysine. Phosphoserine is present on serine 913.

Its subcellular location is the cytoplasm. It localises to the perinuclear region. The protein localises to the endoplasmic reticulum. Involved in calcium homeostasis, growth and proliferation. This is Calcium homeostasis endoplasmic reticulum protein from Mus musculus (Mouse).